The following is a 630-amino-acid chain: Plastin-1 (630 aa).

The fimbrin headpiece stretch occupies residues 1–114 (MENNVTTISR…LGGTSSISTE (114 aa)). 2 EF-hand domains span residues 11–46 (EELE…ASLP) and 51–86 (KVRE…LKSK). Asp24, Asp26, Ser28, Tyr30, Glu35, Asp64, Asn66, Asp68, Lys70, and Glu75 together coordinate Ca(2+). Actin-binding regions lie at residues 108–375 (TSSI…LFNT) and 376–624 (YPAL…LMGR). The interval 115 to 630 (GTQHSYSEEE…LMGRGLNKIK (516 aa)) is fimbrin core. Calponin-homology (CH) domains follow at residues 122–238 (EEEK…KVGL), 266–377 (LSPE…NTYP), 396–505 (SNEE…RRYT), and 517–626 (KVND…GRGL).

As to quaternary structure, monomer. Post-translationally, the N-terminus is blocked.

The protein localises to the cytoplasm. It is found in the cell projection. It localises to the stereocilium. Its function is as follows. Actin-bundling protein. In the inner ear, it is required for stereocilia formation. Mediates liquid packing of actin filaments that is necessary for stereocilia to grow to their proper dimensions. The sequence is that of Plastin-1 (PLS1) from Gallus gallus (Chicken).